Reading from the N-terminus, the 341-residue chain is MEIPEVLETLLAGKDLSPSAMRETMRKIMSGGATPAQIGAFLIALRCKGETVEEVAAAAQVLREMATKVPVSAPHLLDTCGTGGDASKTFNISTTAAFVVAAAGGRVAKHGSRSVSGRSGSADVLEAAGINIELTPDQVKTCIETLGVGFLFAQRHHGAMKYAIGPRRELGVRTLFNLLGPLTNPAGAPNQLVGVYTDPWVEGLARVLQQLGSSHVLVVHAEDGLDEISIAAPTHVAELKNGLITNYYVRPEQFGFRRAALSELAIDTVAASLKMMRGVLDNVPGPARDIVALNAGAAIYAADLTDSLEAGIRRAEAVIADGSARAKLEALAALSRQFAAS.

Residues Gly81, 84–85 (GD), Thr89, 91–94 (NIST), 109–117 (KHGSRSVSG), and Ser121 contribute to the 5-phospho-alpha-D-ribose 1-diphosphate site. Gly81 provides a ligand contact to anthranilate. Ser93 is a binding site for Mg(2+). Arg167 is an anthranilate binding site. Residues Asp226 and Glu227 each contribute to the Mg(2+) site.

Belongs to the anthranilate phosphoribosyltransferase family. As to quaternary structure, homodimer. Mg(2+) is required as a cofactor.

It catalyses the reaction N-(5-phospho-beta-D-ribosyl)anthranilate + diphosphate = 5-phospho-alpha-D-ribose 1-diphosphate + anthranilate. Its pathway is amino-acid biosynthesis; L-tryptophan biosynthesis; L-tryptophan from chorismate: step 2/5. In terms of biological role, catalyzes the transfer of the phosphoribosyl group of 5-phosphorylribose-1-pyrophosphate (PRPP) to anthranilate to yield N-(5'-phosphoribosyl)-anthranilate (PRA). This chain is Anthranilate phosphoribosyltransferase, found in Methylococcus capsulatus (strain ATCC 33009 / NCIMB 11132 / Bath).